Consider the following 138-residue polypeptide: Large-conductance mechanosensitive channel (138 aa).

3 helical membrane-spanning segments follow: residues 15 to 35, 38 to 58, and 80 to 100; these read VDLA…NSIV, IIMP…MFIQ, and GNFI…FLVV.

This sequence belongs to the MscL family. Homopentamer.

It is found in the cell inner membrane. Its function is as follows. Channel that opens in response to stretch forces in the membrane lipid bilayer. May participate in the regulation of osmotic pressure changes within the cell. The protein is Large-conductance mechanosensitive channel of Brucella canis (strain ATCC 23365 / NCTC 10854 / RM-666).